Here is a 683-residue protein sequence, read N- to C-terminus: Bifunctional lysine-specific demethylase and histidyl-hydroxylase NO66 (683 aa).

The span at M1–N26 shows a compositional bias: polar residues. Disordered stretches follow at residues M1–Q162 and A179–S208. The span at L54 to M65 shows a compositional bias: basic and acidic residues. Polar residues predominate over residues I85 to K94. A compositionally biased stretch (basic residues) spans G95–R108. The span at P116–K125 shows a compositional bias: low complexity. S152 is subject to Phosphoserine. T158 is modified (phosphothreonine). At S159 the chain carries Phosphoserine. Residues A179–A189 are compositionally biased toward low complexity. Residues N341 to V480 form the JmjC domain. Residues H381, D383, and H446 each coordinate Fe cation.

This sequence belongs to the ROX family. NO66 subfamily. It depends on Fe(2+) as a cofactor.

It is found in the nucleus. It catalyses the reaction N(6),N(6)-dimethyl-L-lysyl(36)-[histone H3] + 2 2-oxoglutarate + 2 O2 = L-lysyl(36)-[histone H3] + 2 formaldehyde + 2 succinate + 2 CO2. Its function is as follows. Oxygenase that can act as both a histone lysine demethylase and a ribosomal histidine hydroxylase. Specifically demethylates 'Lys-4' (H3K4me) and 'Lys-36' (H3K36me) of histone H3, thereby playing a central role in histone code. This Drosophila yakuba (Fruit fly) protein is Bifunctional lysine-specific demethylase and histidyl-hydroxylase NO66.